Reading from the N-terminus, the 398-residue chain is 1-aminocyclopropane-1-carboxylate oxidase homolog 5 (398 aa).

Residues 247-347 enclose the Fe2OG dioxygenase domain; sequence KSHIMFGQYY…RISMPCFVST (101 aa). Residues His271, Asp273, and His327 each coordinate Fe cation. A 2-oxoglutarate-binding site is contributed by Arg338.

The protein belongs to the iron/ascorbate-dependent oxidoreductase family. It depends on Fe(2+) as a cofactor. Expressed in etiolated seedlings, leaves, stems and flowers.

This Arabidopsis thaliana (Mouse-ear cress) protein is 1-aminocyclopropane-1-carboxylate oxidase homolog 5 (2A6).